A 256-amino-acid polypeptide reads, in one-letter code: Ubiquinone/menaquinone biosynthesis C-methyltransferase UbiE (256 aa).

Residues 1–19 are compositionally biased toward polar residues; it reads MQNRSSSPDSSSAGNTHFG. Positions 1–24 are disordered; that stretch reads MQNRSSSPDSSSAGNTHFGFQSVP. Residues threonine 81, aspartate 102, and 128-129 contribute to the S-adenosyl-L-methionine site; that span reads DA.

It belongs to the class I-like SAM-binding methyltransferase superfamily. MenG/UbiE family.

The catalysed reaction is a 2-demethylmenaquinol + S-adenosyl-L-methionine = a menaquinol + S-adenosyl-L-homocysteine + H(+). The enzyme catalyses a 2-methoxy-6-(all-trans-polyprenyl)benzene-1,4-diol + S-adenosyl-L-methionine = a 5-methoxy-2-methyl-3-(all-trans-polyprenyl)benzene-1,4-diol + S-adenosyl-L-homocysteine + H(+). It participates in quinol/quinone metabolism; menaquinone biosynthesis; menaquinol from 1,4-dihydroxy-2-naphthoate: step 2/2. It functions in the pathway cofactor biosynthesis; ubiquinone biosynthesis. Methyltransferase required for the conversion of demethylmenaquinol (DMKH2) to menaquinol (MKH2) and the conversion of 2-polyprenyl-6-methoxy-1,4-benzoquinol (DDMQH2) to 2-polyprenyl-3-methyl-6-methoxy-1,4-benzoquinol (DMQH2). This Bordetella avium (strain 197N) protein is Ubiquinone/menaquinone biosynthesis C-methyltransferase UbiE.